The following is a 304-amino-acid chain: Porphobilinogen deaminase (304 aa).

C240 is subject to S-(dipyrrolylmethanemethyl)cysteine.

This sequence belongs to the HMBS family. As to quaternary structure, monomer. It depends on dipyrromethane as a cofactor.

It carries out the reaction 4 porphobilinogen + H2O = hydroxymethylbilane + 4 NH4(+). Its pathway is porphyrin-containing compound metabolism; protoporphyrin-IX biosynthesis; coproporphyrinogen-III from 5-aminolevulinate: step 2/4. Functionally, tetrapolymerization of the monopyrrole PBG into the hydroxymethylbilane pre-uroporphyrinogen in several discrete steps. The polypeptide is Porphobilinogen deaminase (Xanthomonas euvesicatoria pv. vesicatoria (strain 85-10) (Xanthomonas campestris pv. vesicatoria)).